The following is a 492-amino-acid chain: Catalase-4 (492 aa).

Residues His65 and Asn138 contribute to the active site. Tyr348 is a heme binding site.

The protein belongs to the catalase family. In terms of assembly, homotetramer. The cofactor is heme.

The protein resides in the peroxisome. Its subcellular location is the glyoxysome. The enzyme catalyses 2 H2O2 = O2 + 2 H2O. In terms of biological role, occurs in almost all aerobically respiring organisms and serves to protect cells from the toxic effects of hydrogen peroxide. This chain is Catalase-4 (CAT4), found in Glycine max (Soybean).